The sequence spans 451 residues: MSEKEIWDKVLEIAQERISNTSYQTFIKDTQLYSLKNDEAIILVSLPFNASWLNQRYSEIMQAIIYDVIGYEVKPHFISEDELASYNNVNTQEVQEPQVQHSSIDDKTWGKEQFNMHNTFDTFVIGPGNRFPHAASLAVAEAPAEAYNPLFIYGGVGLGKTHLMHAIGHHVLSNKPNAKVIYTSSEKFTNEFIKSIRDNETEAFREKYRKIDVLLIDDIQFIQNKEQTQEEFFHTFNELHQNNKQIVISSDRPPKEIAKLEDRLRSRFEWGLIVDITPPDYETRMAILQKKIEEENLDIPPEALNYIANQIQSNIRELEGALTRLLAYSKLQGKPITTELTAEALKDIIQSPKSKKITIQDIQKVVGQYYSVRIEDFSAKKRTKSIAYPRQIAMYLSRELTDFSLPKIGEEFGGRDHTTVIHAHEKIANDIKSDPTFKQEVENLEKEIRNQ.

The interval 1-71 (MSEKEIWDKV…QAIIYDVIGY (71 aa)) is domain I, interacts with DnaA modulators. The interval 71 to 112 (YEVKPHFISEDELASYNNVNTQEVQEPQVQHSSIDDKTWGKE) is domain II. A domain III, AAA+ region region spans residues 113-329 (QFNMHNTFDT…GALTRLLAYS (217 aa)). ATP is bound by residues G157, G159, K160, and T161. Residues 330-451 (KLQGKPITTE…ENLEKEIRNQ (122 aa)) form a domain IV, binds dsDNA region.

This sequence belongs to the DnaA family. In terms of assembly, oligomerizes as a right-handed, spiral filament on DNA at oriC.

The protein resides in the cytoplasm. Its function is as follows. Plays an essential role in the initiation and regulation of chromosomal replication. ATP-DnaA binds to the origin of replication (oriC) to initiate formation of the DNA replication initiation complex once per cell cycle. Binds the DnaA box (a 9 base pair repeat at the origin) and separates the double-stranded (ds)DNA. Forms a right-handed helical filament on oriC DNA; dsDNA binds to the exterior of the filament while single-stranded (ss)DNA is stabiized in the filament's interior. The ATP-DnaA-oriC complex binds and stabilizes one strand of the AT-rich DNA unwinding element (DUE), permitting loading of DNA polymerase. After initiation quickly degrades to an ADP-DnaA complex that is not apt for DNA replication. Binds acidic phospholipids. The polypeptide is Chromosomal replication initiator protein DnaA (Staphylococcus epidermidis (strain ATCC 12228 / FDA PCI 1200)).